Here is a 666-residue protein sequence, read N- to C-terminus: Peptidase S41 family protein phomP1 (666 aa).

Residues 1–27 form the signal peptide; the sequence is MSSFLVQTAVVRLFLLGVVFWFPFALS. Residues Asn-70, Asn-214, and Asn-234 are each glycosylated (N-linked (GlcNAc...) asparagine). The interval 303 to 504 is peptidase S41 domain; the sequence is DVAVLQITSF…LLQAQGVRTV (202 aa). N-linked (GlcNAc...) asparagine glycans are attached at residues Asn-555 and Asn-612.

The protein belongs to the peptidase S41A family.

The protein operates within mycotoxin biosynthesis. Functionally, peptidase S41 family protein; part of the gene cluster that mediates the biosynthesis of the phomopsins, a group of hexapeptide mycotoxins which infects lupins and causes lupinosis disease in livestock. Within the pathway, phomP1 and phomP1' are probably involved in the processing of the phomA and phomA' precursors. The pathway starts with the processing of the precursor phomA by several endopeptidases including kexin proteases as well as the cluster-specific S41 family peptidase phomP1 and the oligopeptidase phomG to produce 10 identical copies of the hexapeptide Tyr-Val-Ile-Pro-Ile-Asp. After being excised from the precursor peptide, the core peptides are cyclized and modified post-translationally by enzymes encoded within the gene cluster. The timing and order of proteolysis of the phomA precursor and PTMs are still unknown. Two tyrosinase-like enzymes, phomQ1 and phomQ2, catalyze the chlorination and hydroxylation of Tyr, respectively. PhomYb, is proposed to be involved in the construction of the macrocyclic structure. The other 4 ustYa family proteins may be involved in PTMs that generate the unique structure of phomopsin A. PhomYa is required for the hydroxylation of C-beta of Tyr. PhomYc, phomYd, and phomYe are responsible for the biosynthesis of 2,3-dehydroisoleucine (dIle), 2,3-dehydroaspartic acid (dAsp), and 3,4-dehydroproline (dPro), respectively. While dIle formation by phomYc is indispensable for the installation of dAsp by phomYd, the order of the other PTMs have not been elucidated yet. Most of the biosynthetic enzymes likely have broad substrate specificity, and thus, there might be a metabolic grid from a precursor to phomopsin A. The enzyme(s) responsible for the biosynthesis of 3,4-dehydrovaline (dVal) have also not been identified yet. Finally, phomM acts as an S-adenosylmethionine-dependent alpha-N-methyltransferase that catalyzes two successive N-methylation reactions, converting N-desmethyl-phomopsin A to phomopsin A and phomopsin A further to an N,N-dimethylated congener called phomopsin E. The sequence is that of Peptidase S41 family protein phomP1 from Diaporthe leptostromiformis (Lupinosis disease fungus).